The chain runs to 503 residues: Glutamate--tRNA ligase 1 (503 aa).

Residues 17–27 (PSPTGFLHIGN) carry the 'HIGH' region motif. The 'KMSKS' region signature appears at 261-265 (KLSKR). K264 contacts ATP.

The protein belongs to the class-I aminoacyl-tRNA synthetase family. Glutamate--tRNA ligase type 1 subfamily. As to quaternary structure, monomer.

It is found in the cytoplasm. The enzyme catalyses tRNA(Glu) + L-glutamate + ATP = L-glutamyl-tRNA(Glu) + AMP + diphosphate. Its function is as follows. Catalyzes the attachment of glutamate to tRNA(Glu) in a two-step reaction: glutamate is first activated by ATP to form Glu-AMP and then transferred to the acceptor end of tRNA(Glu). The polypeptide is Glutamate--tRNA ligase 1 (Levilactobacillus brevis (strain ATCC 367 / BCRC 12310 / CIP 105137 / JCM 1170 / LMG 11437 / NCIMB 947 / NCTC 947) (Lactobacillus brevis)).